Consider the following 886-residue polypeptide: Alanine--tRNA ligase (886 aa).

Residues histidine 568, histidine 572, cysteine 670, and histidine 674 each contribute to the Zn(2+) site.

The protein belongs to the class-II aminoacyl-tRNA synthetase family. Requires Zn(2+) as cofactor.

It localises to the cytoplasm. It carries out the reaction tRNA(Ala) + L-alanine + ATP = L-alanyl-tRNA(Ala) + AMP + diphosphate. Functionally, catalyzes the attachment of alanine to tRNA(Ala) in a two-step reaction: alanine is first activated by ATP to form Ala-AMP and then transferred to the acceptor end of tRNA(Ala). Also edits incorrectly charged Ser-tRNA(Ala) and Gly-tRNA(Ala) via its editing domain. The chain is Alanine--tRNA ligase from Prochlorococcus marinus (strain NATL1A).